We begin with the raw amino-acid sequence, 368 residues long: uncharacterized protein (368 aa).

Residues 156-182 (SNVNAHNNNNNSNNNNNNNNNSNNNNN) are compositionally biased toward low complexity. Disordered stretches follow at residues 156–213 (SNVN…SSPY), 228–259 (ASTN…INDL), and 291–319 (STTS…FSTA). Over residues 183–194 (LYNQTQFSTRYF) the composition is skewed to polar residues. Low complexity-rich tracts occupy residues 195-213 (NSNS…SSPY) and 228-240 (ASTN…SNNS). 2 stretches are compositionally biased toward polar residues: residues 241 to 254 (MHTN…TSAD) and 297 to 311 (IGTN…PSPS).

This is an uncharacterized protein from Saccharomyces cerevisiae (strain ATCC 204508 / S288c) (Baker's yeast).